Consider the following 205-residue polypeptide: MSEIKLNYHKTHFLTSAPNIRSIPEDTGIEIAFAGRSNAGKSTALNALTNQKNLARTSKTPGRTQLINLFEVEPNCKLVDLPGYGYAAVPEQMKIQWQKSLGEYLQKRECLAGLVVLMDIRHPLKDLDQQMIEWAVSANLPVLLLLTKADKLSQSARSKQVKMVREAILPFQGDIQVEAFSAQNKIGIDKLAAKLDFWFSPLFAK.

Residues 27–201 enclose the EngB-type G domain; it reads TGIEIAFAGR…AAKLDFWFSP (175 aa). GTP is bound by residues 35-42, 62-66, 80-83, 147-150, and 180-182; these read GRSNAGKS, GRTQL, DLPG, TKAD, and FSA. Positions 42 and 64 each coordinate Mg(2+).

The protein belongs to the TRAFAC class TrmE-Era-EngA-EngB-Septin-like GTPase superfamily. EngB GTPase family. It depends on Mg(2+) as a cofactor.

Functionally, necessary for normal cell division and for the maintenance of normal septation. This is Probable GTP-binding protein EngB from Haemophilus influenzae (strain 86-028NP).